A 231-amino-acid chain; its full sequence is Large ribosomal subunit protein uL1 (231 aa).

The protein belongs to the universal ribosomal protein uL1 family. Part of the 50S ribosomal subunit.

Its function is as follows. Binds directly to 23S rRNA. The L1 stalk is quite mobile in the ribosome, and is involved in E site tRNA release. Functionally, protein L1 is also a translational repressor protein, it controls the translation of the L11 operon by binding to its mRNA. The sequence is that of Large ribosomal subunit protein uL1 from Neisseria meningitidis serogroup C (strain 053442).